The chain runs to 218 residues: Small ribosomal subunit protein uS3c (218 aa).

Residues 47-118 (VQKNMKTSSG…KLNIAITRIE (72 aa)) form the KH type-2 domain.

This sequence belongs to the universal ribosomal protein uS3 family. As to quaternary structure, part of the 30S ribosomal subunit.

Its subcellular location is the plastid. The protein resides in the chloroplast. This is Small ribosomal subunit protein uS3c (rps3) from Lactuca sativa (Garden lettuce).